We begin with the raw amino-acid sequence, 588 residues long: Probable cytochrome c oxidase subunit 1-beta (588 aa).

Residues 1–26 are disordered; sequence MTATPAQRRPALPATRPYPARHGPKG. The chain crosses the membrane as a helical span at residues 43-63; the sequence is VLYLVSATGFFLIGGLLALLM. Residue H87 participates in Fe(II)-heme a binding. Helical transmembrane passes span 90 to 110, 128 to 148, 171 to 191, 214 to 234, 259 to 279, and 291 to 311; these read IMLL…VLPL, WLYL…GGAA, LWIL…VNMI, ILIT…ALMA, LFWF…FGII, and IFGY…SMAV. H265 and Y269 together coordinate Cu cation. Residues 265-269 constitute a cross-link (1'-histidyl-3'-tyrosine (His-Tyr)); it reads HPEVY. Cu cation is bound by residues H314 and H315. The next 2 helical transmembrane spans lie at 320-340 and 360-380; these read GAVL…PTGV and MLFA…GVIL. H398 contacts heme a3. A run of 3 helical transmembrane segments spans residues 399 to 419, 434 to 454, and 477 to 497; these read FHYV…YFWF, LHFW…HWLG, and VSTI…WNGF. H400 serves as a coordination point for Fe(II)-heme a. The segment at 557–588 is disordered; it reads AEAHAGRRAGHGAGAELSVPSTVATKDDDHTS.

Belongs to the heme-copper respiratory oxidase family. As to quaternary structure, associates with subunits II, III and IV to form cytochrome c oxidase. Cu(2+) is required as a cofactor. It depends on heme as a cofactor.

It is found in the cell membrane. It carries out the reaction 4 Fe(II)-[cytochrome c] + O2 + 8 H(+)(in) = 4 Fe(III)-[cytochrome c] + 2 H2O + 4 H(+)(out). The protein operates within energy metabolism; oxidative phosphorylation. Functionally, cytochrome c oxidase is the component of the respiratory chain that catalyzes the reduction of oxygen to water. Subunits 1-3 form the functional core of the enzyme complex. CO I is the catalytic subunit of the enzyme. Electrons originating in cytochrome c are transferred via the copper A center of subunit 2 and heme A of subunit 1 to the bimetallic center formed by heme A3 and copper B. This is Probable cytochrome c oxidase subunit 1-beta (ctaD2) from Nocardia farcinica (strain IFM 10152).